A 341-amino-acid polypeptide reads, in one-letter code: 4-hydroxy-2-oxovalerate aldolase (341 aa).

Residues 5–257 form the Pyruvate carboxyltransferase domain; it reads ITLHDMTLRD…ETGVDVFRIA (253 aa). 13–14 is a binding site for substrate; the sequence is RD. A Mn(2+)-binding site is contributed by D14. Catalysis depends on H17, which acts as the Proton acceptor. Residues S167 and H196 each coordinate substrate. H196 and H198 together coordinate Mn(2+). Position 287 (Y287) interacts with substrate.

Belongs to the 4-hydroxy-2-oxovalerate aldolase family.

The catalysed reaction is (S)-4-hydroxy-2-oxopentanoate = acetaldehyde + pyruvate. The polypeptide is 4-hydroxy-2-oxovalerate aldolase (mhpE) (Cupriavidus taiwanensis (strain DSM 17343 / BCRC 17206 / CCUG 44338 / CIP 107171 / LMG 19424 / R1) (Ralstonia taiwanensis (strain LMG 19424))).